The following is a 423-amino-acid chain: Phosphoribosylamine--glycine ligase (423 aa).

The 208-residue stretch at 107–314 folds into the ATP-grasp domain; the sequence is KAFMAKYNIP…LSDLVEAAID (208 aa). 133–194 is an ATP binding site; sequence VNQKGAPIVI…EDFLQGEEAS (62 aa). Mg(2+) contacts are provided by Glu284 and Asn286.

It belongs to the GARS family. Mg(2+) serves as cofactor. The cofactor is Mn(2+).

The catalysed reaction is 5-phospho-beta-D-ribosylamine + glycine + ATP = N(1)-(5-phospho-beta-D-ribosyl)glycinamide + ADP + phosphate + H(+). The protein operates within purine metabolism; IMP biosynthesis via de novo pathway; N(1)-(5-phospho-D-ribosyl)glycinamide from 5-phospho-alpha-D-ribose 1-diphosphate: step 2/2. This is Phosphoribosylamine--glycine ligase from Neisseria meningitidis serogroup B (strain ATCC BAA-335 / MC58).